The sequence spans 75 residues: Peptide Ctri10033 (75 aa).

The first 22 residues, Met1–Gly22, serve as a signal peptide directing secretion. An Arginine amide modification is found at Arg43. A propeptide spanning residues Glu47 to Tyr75 is cleaved from the precursor.

The protein belongs to the non-disulfide-bridged peptide (NDBP) superfamily. Short antimicrobial peptide (group 4) family. As to expression, expressed by the venom gland.

It is found in the secreted. The protein is Peptide Ctri10033 of Chaerilus tricostatus (Scorpion).